The chain runs to 109 residues: MPSSKDWGSTSILVASEAIPALRNANRTISPLVSGFVIVSPFPFFRFLGFLWCLYFVNRRHKAPFFELREIPCHYHRLDIPCCIIRPGKNTFSFHFHLDKKGTKAPTSS.

The protein is Putative protein p26 (26) of Acyrthosiphon pisum secondary endosymbiont phage 1 (Bacteriophage APSE-1).